We begin with the raw amino-acid sequence, 95 residues long: Aspartyl/glutamyl-tRNA(Asn/Gln) amidotransferase subunit C (95 aa).

It belongs to the GatC family. Heterotrimer of A, B and C subunits.

The enzyme catalyses L-glutamyl-tRNA(Gln) + L-glutamine + ATP + H2O = L-glutaminyl-tRNA(Gln) + L-glutamate + ADP + phosphate + H(+). It catalyses the reaction L-aspartyl-tRNA(Asn) + L-glutamine + ATP + H2O = L-asparaginyl-tRNA(Asn) + L-glutamate + ADP + phosphate + 2 H(+). Allows the formation of correctly charged Asn-tRNA(Asn) or Gln-tRNA(Gln) through the transamidation of misacylated Asp-tRNA(Asn) or Glu-tRNA(Gln) in organisms which lack either or both of asparaginyl-tRNA or glutaminyl-tRNA synthetases. The reaction takes place in the presence of glutamine and ATP through an activated phospho-Asp-tRNA(Asn) or phospho-Glu-tRNA(Gln). This Chlorobium luteolum (strain DSM 273 / BCRC 81028 / 2530) (Pelodictyon luteolum) protein is Aspartyl/glutamyl-tRNA(Asn/Gln) amidotransferase subunit C.